We begin with the raw amino-acid sequence, 132 residues long: Small ribosomal subunit protein uS8 (132 aa).

It belongs to the universal ribosomal protein uS8 family. In terms of assembly, part of the 30S ribosomal subunit. Contacts proteins S5 and S12.

In terms of biological role, one of the primary rRNA binding proteins, it binds directly to 16S rRNA central domain where it helps coordinate assembly of the platform of the 30S subunit. The protein is Small ribosomal subunit protein uS8 of Arthrobacter sp. (strain FB24).